We begin with the raw amino-acid sequence, 226 residues long: Urease accessory protein UreF (226 aa).

Belongs to the UreF family. UreD, UreF and UreG form a complex that acts as a GTP-hydrolysis-dependent molecular chaperone, activating the urease apoprotein by helping to assemble the nickel containing metallocenter of UreC. The UreE protein probably delivers the nickel.

It is found in the cytoplasm. Required for maturation of urease via the functional incorporation of the urease nickel metallocenter. The polypeptide is Urease accessory protein UreF (Paraburkholderia phymatum (strain DSM 17167 / CIP 108236 / LMG 21445 / STM815) (Burkholderia phymatum)).